The primary structure comprises 72 residues: 3-deoxy-manno-octulosonate cytidylyltransferase (72 aa).

This sequence belongs to the KdsB family. As to quaternary structure, homodimer.

It localises to the cytoplasm. It catalyses the reaction 3-deoxy-alpha-D-manno-oct-2-ulosonate + CTP = CMP-3-deoxy-beta-D-manno-octulosonate + diphosphate. Its pathway is nucleotide-sugar biosynthesis; CMP-3-deoxy-D-manno-octulosonate biosynthesis; CMP-3-deoxy-D-manno-octulosonate from 3-deoxy-D-manno-octulosonate and CTP: step 1/1. It functions in the pathway bacterial outer membrane biogenesis; lipopolysaccharide biosynthesis. Its function is as follows. Activates KDO (a required 8-carbon sugar) for incorporation into bacterial lipopolysaccharide in Gram-negative bacteria. This chain is 3-deoxy-manno-octulosonate cytidylyltransferase (kpsU), found in Escherichia coli.